The chain runs to 185 residues: Large ribosomal subunit protein uL5 (185 aa).

Belongs to the universal ribosomal protein uL5 family. Part of the 50S ribosomal subunit; part of the 5S rRNA/L5/L18/L25 subcomplex. Contacts the 5S rRNA and the P site tRNA. Forms a bridge to the 30S subunit in the 70S ribosome.

This is one of the proteins that bind and probably mediate the attachment of the 5S RNA into the large ribosomal subunit, where it forms part of the central protuberance. In the 70S ribosome it contacts protein S13 of the 30S subunit (bridge B1b), connecting the 2 subunits; this bridge is implicated in subunit movement. Contacts the P site tRNA; the 5S rRNA and some of its associated proteins might help stabilize positioning of ribosome-bound tRNAs. This is Large ribosomal subunit protein uL5 from Xanthobacter autotrophicus (strain ATCC BAA-1158 / Py2).